A 246-amino-acid polypeptide reads, in one-letter code: Probable transcriptional regulatory protein YebC (246 aa).

The segment at 1–20 (MAGHSKWANTRHRKAAQDAK) is disordered.

Belongs to the TACO1 family.

Its subcellular location is the cytoplasm. In Shigella dysenteriae serotype 1 (strain Sd197), this protein is Probable transcriptional regulatory protein YebC.